Here is a 166-residue protein sequence, read N- to C-terminus: Large ribosomal subunit protein uL10 (166 aa).

The protein belongs to the universal ribosomal protein uL10 family. Part of the ribosomal stalk of the 50S ribosomal subunit. The N-terminus interacts with L11 and the large rRNA to form the base of the stalk. The C-terminus forms an elongated spine to which L12 dimers bind in a sequential fashion forming a multimeric L10(L12)X complex.

Forms part of the ribosomal stalk, playing a central role in the interaction of the ribosome with GTP-bound translation factors. This is Large ribosomal subunit protein uL10 from Flavobacterium psychrophilum (strain ATCC 49511 / DSM 21280 / CIP 103535 / JIP02/86).